The following is a 217-amino-acid chain: MEQNEREKKGAGAPNSAKAIVEALLFAAGDEGLSLSQIAAVLEVSELEAKAVIEELQQDCRREERGIQLVELGGVFLLATKKEHAPYLKKLVEAPGASPLSQAALETLAIIAYRQPITRAEIEEIRGVKSDKPLQTLMARALIKEVGRAEGTGRPILYGTTPEFLDYFGLKTLEELPPLPEWADDGESEREADLFFEKLAENLSDGQPEYGKLKKNG.

Belongs to the ScpB family. As to quaternary structure, homodimer. Homodimerization may be required to stabilize the binding of ScpA to the Smc head domains. Component of a cohesin-like complex composed of ScpA, ScpB and the Smc homodimer, in which ScpA and ScpB bind to the head domain of Smc. The presence of the three proteins is required for the association of the complex with DNA.

It localises to the cytoplasm. Functionally, participates in chromosomal partition during cell division. May act via the formation of a condensin-like complex containing Smc and ScpA that pull DNA away from mid-cell into both cell halves. In Geobacillus kaustophilus (strain HTA426), this protein is Segregation and condensation protein B.